The primary structure comprises 92 residues: Actobindin-A (92 aa).

2 disordered regions span residues M1–D33 and L54–S92. WH2 domains lie at A3–T20 and D40–A57. Basic and acidic residues-rich tracts occupy residues K13 to D33 and L54 to A64. Residues N68–S79 show a composition bias toward polar residues.

In terms of assembly, monomer.

Its function is as follows. Is able to bind two actin monomers at high concentrations of G-actin. Inhibits actin polymerization by sequestering G-actin and stabilizing actin dimers. The sequence is that of Actobindin-A (abnA) from Dictyostelium discoideum (Social amoeba).